Here is a 128-residue protein sequence, read N- to C-terminus: MITDPIADFCSAIQNAAYAKKKEIKVPYSFLKERIAQVMLHEGYLEKIEKIEVRKNIFELKVVLKEPALITKIKRISKPGLRQYVGYKEIPNILRGLGICILSTSRGIMAGHRAKRMKLGGELLLAIY.

The protein belongs to the universal ribosomal protein uS8 family. Part of the 30S ribosomal subunit. Contacts proteins S5 and S12.

One of the primary rRNA binding proteins, it binds directly to 16S rRNA central domain where it helps coordinate assembly of the platform of the 30S subunit. The chain is Small ribosomal subunit protein uS8 from Methylacidiphilum infernorum (isolate V4) (Methylokorus infernorum (strain V4)).